A 305-amino-acid polypeptide reads, in one-letter code: Protoheme IX farnesyltransferase (305 aa).

9 helical membrane-spanning segments follow: residues 28–48, 52–72, 101–121, 122–142, 149–169, 174–194, 218–238, 240–260, and 283–303; these read IIEL…QGVP, LVLL…ALNM, LAFG…TVNW, LSAW…TMIL, NIVW…SSVT, WAPV…YWPL, VVAR…LLLT, LGYT…FWLW, and LFHW…VDPF.

This sequence belongs to the UbiA prenyltransferase family. Protoheme IX farnesyltransferase subfamily.

Its subcellular location is the cell membrane. It carries out the reaction heme b + (2E,6E)-farnesyl diphosphate + H2O = Fe(II)-heme o + diphosphate. Its pathway is porphyrin-containing compound metabolism; heme O biosynthesis; heme O from protoheme: step 1/1. Its function is as follows. Converts heme B (protoheme IX) to heme O by substitution of the vinyl group on carbon 2 of heme B porphyrin ring with a hydroxyethyl farnesyl side group. The polypeptide is Protoheme IX farnesyltransferase (Streptomyces avermitilis (strain ATCC 31267 / DSM 46492 / JCM 5070 / NBRC 14893 / NCIMB 12804 / NRRL 8165 / MA-4680)).